A 407-amino-acid chain; its full sequence is Phosphopentomutase (407 aa).

6 residues coordinate Mn(2+): Asp-11, Asp-305, His-310, Asp-346, His-347, and His-358.

This sequence belongs to the phosphopentomutase family. It depends on Mn(2+) as a cofactor.

Its subcellular location is the cytoplasm. It carries out the reaction 2-deoxy-alpha-D-ribose 1-phosphate = 2-deoxy-D-ribose 5-phosphate. The catalysed reaction is alpha-D-ribose 1-phosphate = D-ribose 5-phosphate. The protein operates within carbohydrate degradation; 2-deoxy-D-ribose 1-phosphate degradation; D-glyceraldehyde 3-phosphate and acetaldehyde from 2-deoxy-alpha-D-ribose 1-phosphate: step 1/2. Isomerase that catalyzes the conversion of deoxy-ribose 1-phosphate (dRib-1-P) and ribose 1-phosphate (Rib-1-P) to deoxy-ribose 5-phosphate (dRib-5-P) and ribose 5-phosphate (Rib-5-P), respectively. The chain is Phosphopentomutase from Legionella pneumophila (strain Paris).